Consider the following 405-residue polypeptide: Growth/differentiation factor 11 (405 aa).

Residues 1 to 20 (MVLAAPLLLGFLLLALELRP) form the signal peptide. Residues 21-296 (RGEAAEGPAA…VLENTKRSRR (276 aa)) constitute a propeptide that is removed on maturation. N-linked (GlcNAc...) asparagine glycosylation occurs at Asn92. Disulfide bonds link Cys302-Cys312, Cys311-Cys370, Cys339-Cys402, and Cys343-Cys404.

Belongs to the TGF-beta family. In terms of assembly, homodimer; disulfide-linked. Interacts directly with ACVR2B. Interacts directly with ACVR2A. Interacts with ACVR1B, TGFBR1 and ACVR1C in an ACVR2B-dependent manner. Interacts with FST isoform 2/FS288. Synthesized as large precursor molecule that undergoes proteolytic cleavage by furin-like proteases. This produces an inactive form consisting of the mature C-terminal portion non-covalently bound to its cleaved N-terminal propeptide. Activation of the mature form requires additional cleavage of the propeptide by a tolloid-like metalloproteinase. Highly expressed in the developing limb bud, initially detected in the distal mesenchyme, and later localizing to regions around the developing bones. Is also expressed in adult dental pulp and brain.

It is found in the secreted. In terms of biological role, secreted signal that acts globally to regulate anterior/posterior axial patterning during development. May play critical roles in patterning both mesodermal and neural tissues. It is required for proper vertebral patterning and orofacial development. Signals through activin receptors type-2, ACVR2A and ACVR2B, and activin receptors type-1, ACVR1B, ACVR1C and TGFBR1 leading to the phosphorylation of SMAD2 and SMAD3. The polypeptide is Growth/differentiation factor 11 (Gdf11) (Mus musculus (Mouse)).